The chain runs to 261 residues: Probable enoyl-CoA hydratase EchA17 (261 aa).

The protein belongs to the enoyl-CoA hydratase/isomerase family.

It catalyses the reaction a (3S)-3-hydroxyacyl-CoA = a (2E)-enoyl-CoA + H2O. The enzyme catalyses a 4-saturated-(3S)-3-hydroxyacyl-CoA = a (3E)-enoyl-CoA + H2O. Functionally, could possibly oxidize fatty acids using specific components. This is Probable enoyl-CoA hydratase EchA17 (echA17) from Mycobacterium bovis (strain BCG / Pasteur 1173P2).